A 225-amino-acid polypeptide reads, in one-letter code: Cytidylate kinase (225 aa).

Position 12–20 (12–20) interacts with ATP; the sequence is GPSGAGKGT.

This sequence belongs to the cytidylate kinase family. Type 1 subfamily.

It is found in the cytoplasm. It catalyses the reaction CMP + ATP = CDP + ADP. The catalysed reaction is dCMP + ATP = dCDP + ADP. The chain is Cytidylate kinase from Vibrio cholerae serotype O1 (strain ATCC 39315 / El Tor Inaba N16961).